The primary structure comprises 374 residues: Ribosomal RNA large subunit methyltransferase G (374 aa).

Belongs to the methyltransferase superfamily. RlmG family.

It is found in the cytoplasm. It carries out the reaction guanosine(1835) in 23S rRNA + S-adenosyl-L-methionine = N(2)-methylguanosine(1835) in 23S rRNA + S-adenosyl-L-homocysteine + H(+). In terms of biological role, specifically methylates the guanine in position 1835 (m2G1835) of 23S rRNA. The sequence is that of Ribosomal RNA large subunit methyltransferase G from Pseudomonas entomophila (strain L48).